The primary structure comprises 351 residues: Type II restriction enzyme NmeDI (351 aa).

It catalyses the reaction Endonucleolytic cleavage of DNA to give specific double-stranded fragments with terminal 5'-phosphates.. In terms of biological role, a P subtype restriction enzyme that recognizes the double-stranded sequence 5'-N(12)RCCGGYN(12)-3' and cleaves on both sides of the recognition sequence. This chain is Type II restriction enzyme NmeDI (nmeDIRP), found in Neisseria meningitidis serogroup C.